A 68-amino-acid chain; its full sequence is Serine palmitoyltransferase small subunit A (68 aa).

Residues 1–9 (MAFGDAWKQ) lie on the Cytoplasmic side of the membrane. Residues 10–26 (LSWFYYQYLLVTALYML) form a helical membrane-spanning segment. Topologically, residues 27-31 (EPWER) are lumenal. Residues 32–54 (TIFNSLLISVAAMAVYTGYVFMP) traverse the membrane as a helical segment. Over 55-68 (QHIMAILHYFEVVQ) the chain is Cytoplasmic.

The protein belongs to the SPTSS family. SPTSSA subfamily. In terms of assembly, component of the serine palmitoyltransferase (SPT) complex, which is composed of SPTLC1, SPTLC2 or SPTLC3 and SPTSSA or SPTSSB. The heterodimer consisting of SPTLC1 and SPTLC2/SPTLC3 forms the catalytic core of the enzyme, while SPTSSA or SPTSSB subunits determine substrate specificity. SPT also interacts with ORMDL proteins, especially ORMDL3, which negatively regulate SPT activity in the presence of ceramides.

Its subcellular location is the endoplasmic reticulum membrane. It functions in the pathway lipid metabolism; sphingolipid metabolism. Its function is as follows. Component of the serine palmitoyltransferase multisubunit enzyme (SPT) that catalyzes the initial and rate-limiting step in sphingolipid biosynthesis by condensing L-serine and activated acyl-CoA (most commonly palmitoyl-CoA) to form long-chain bases. The SPT complex is composed of SPTLC1, SPTLC2 or SPTLC3 and SPTSSA or SPTSSB. Within this complex, the heterodimer consisting of SPTLC1 and SPTLC2/SPTLC3 forms the catalytic core. Within the SPT complex, SPTSSA stimulates the catalytic activity and plays a role in substrate specificity, which depends upon the overall complex composition. The SPTLC1-SPTLC2-SPTSSA complex shows a strong preference for C16-CoA substrate, while the SPTLC1-SPTLC3-SPTSSA isozyme uses both C14-CoA and C16-CoA as substrates, with a slight preference for C14-CoA. Independently of its action as a SPT component, may be involved in MBOAT7 localization to mitochondria-associated membranes, a membrane bridge between the endoplasmic reticulum and mitochondria, may hence affect MBOAT7-catalyzed incorporation of arachidonic acid into phosphatidylinositol. The polypeptide is Serine palmitoyltransferase small subunit A (sptssa) (Danio rerio (Zebrafish)).